A 357-amino-acid chain; its full sequence is MAELREVQITEEKPLLPGQTPEVAKTHSVETPYGSVTFTVYGTPKPKRPAILTYHDVGLNYKSCFQPLFQFADMQEIIQNFVRVHVDAPGMEEGAPVFPLGYQYPSLDQLADMIPCILQYLNFSTIIGIGVGAGAYVLSRYALTHPDTVEGLVLINIDPNAKGWMDWAAHKLTGLTSSISEMILGHLFSQEELSGNSELIQKYRNIIAHAPNLDNIELYWNSYNNRRDLNFVRGGDTTLKCPVMLVVGDQAPHEDAVVECNSKLDPTQTSFLKMADSGGQPQLTQPGKLTEAFKYFLQGMGYMASSCMTRLSRSRTASLTSAASIDGNRSRSRTLSQSSESGTLSSGPPGHTMEVSC.

Positions 1–14 (MAELREVQITEEKP) are enriched in basic and acidic residues. A disordered region spans residues 1-26 (MAELREVQITEEKPLLPGQTPEVAKT). Alanine 2 carries the N-acetylalanine modification. Threonine 20 is modified (phosphothreonine). A phosphoserine mark is found at serine 312 and serine 314. The residue at position 316 (threonine 316) is a Phosphothreonine. Serine 318 bears the Phosphoserine mark. Residue threonine 320 is modified to Phosphothreonine. Residues 320-357 (TSAASIDGNRSRSRTLSQSSESGTLSSGPPGHTMEVSC) are disordered. Phosphoserine is present on residues serine 321, serine 324, and serine 330. Residues 333–347 (RTLSQSSESGTLSSG) are compositionally biased toward low complexity. Threonine 334 is modified (phosphothreonine). Serine 336, serine 338, serine 339, and serine 341 each carry phosphoserine. A Phosphothreonine modification is found at threonine 343. A Phosphoserine modification is found at serine 356.

The protein belongs to the NDRG family. Interacts with CTNNB1.

It localises to the cytoplasm. The protein resides in the perinuclear region. Its subcellular location is the cell projection. It is found in the growth cone. Its function is as follows. Contributes to the regulation of the Wnt signaling pathway. Down-regulates CTNNB1-mediated transcriptional activation of target genes, such as CCND1, and may thereby act as tumor suppressor. May be involved in dendritic cell and neuron differentiation. The sequence is that of Protein NDRG2 (NDRG2) from Bos taurus (Bovine).